Here is a 437-residue protein sequence, read N- to C-terminus: Epsilon-sarcoglycan (437 aa).

Over 1 to 317 (MQLPRWWELG…LKSRDYYTDF (317 aa)) the chain is Extracellular. Asn-200 carries N-linked (GlcNAc...) asparagine glycosylation. Residues 318–338 (LITLAVPSAVALVLFLILAYI) traverse the membrane as a helical segment. The Cytoplasmic segment spans residues 339–437 (MCCRREGVEK…QQQTTGKWYP (99 aa)).

Belongs to the sarcoglycan alpha/epsilon family. In terms of processing, N-glycosylated. Ubiquitinated, leading to its degradation by the proteasome.

Its subcellular location is the cell membrane. The protein resides in the sarcolemma. It localises to the cytoplasm. The protein localises to the cytoskeleton. It is found in the cell projection. Its subcellular location is the dendrite. The protein resides in the golgi apparatus. Component of the sarcoglycan complex, a subcomplex of the dystrophin-glycoprotein complex which forms a link between the F-actin cytoskeleton and the extracellular matrix. This Pongo abelii (Sumatran orangutan) protein is Epsilon-sarcoglycan.